The sequence spans 76 residues: Exodeoxyribonuclease 7 small subunit (76 aa).

The protein belongs to the XseB family. Heterooligomer composed of large and small subunits.

Its subcellular location is the cytoplasm. It catalyses the reaction Exonucleolytic cleavage in either 5'- to 3'- or 3'- to 5'-direction to yield nucleoside 5'-phosphates.. Bidirectionally degrades single-stranded DNA into large acid-insoluble oligonucleotides, which are then degraded further into small acid-soluble oligonucleotides. This Staphylococcus aureus (strain Mu3 / ATCC 700698) protein is Exodeoxyribonuclease 7 small subunit.